Consider the following 239-residue polypeptide: tRNA1(Val) (adenine(37)-N6)-methyltransferase (239 aa).

It belongs to the methyltransferase superfamily. tRNA (adenine-N(6)-)-methyltransferase family.

Its subcellular location is the cytoplasm. The enzyme catalyses adenosine(37) in tRNA1(Val) + S-adenosyl-L-methionine = N(6)-methyladenosine(37) in tRNA1(Val) + S-adenosyl-L-homocysteine + H(+). Specifically methylates the adenine in position 37 of tRNA(1)(Val) (anticodon cmo5UAC). This chain is tRNA1(Val) (adenine(37)-N6)-methyltransferase, found in Vibrio parahaemolyticus serotype O3:K6 (strain RIMD 2210633).